The sequence spans 402 residues: Caspase-1 (402 aa).

In terms of domain architecture, CARD spans 1–91 (MADKVLRAKR…YLAEILELQS (91 aa)). The propeptide occupies 1–118 (MADKVLRAKR…PFSSETKEKL (118 aa)). Catalysis depends on residues His236 and Cys284. Positions 297 to 314 (SVGNSEEGFLTDAIFEDD) are excised as a propeptide. A Phosphoserine modification is found at Ser301.

The protein belongs to the peptidase C14A family. As to quaternary structure, heterotetramer that consists of two anti-parallel arranged heterodimers, each one formed by a 20 kDa (Caspase-1 subunit p20) and a 10 kDa (Caspase-1 subunit p10) subunit. May be a component of the inflammasome, a protein complex which also includes PYCARD, CARD8 and NLRP2 and whose function would be the activation of pro-inflammatory caspases. Component of the AIM2 PANoptosome complex, a multiprotein complex that drives inflammatory cell death (PANoptosis). Both the p10 and p20 subunits interact with MEFV. Interacts with CARD17P/INCA and CARD18. Interacts with SERPINB1; this interaction regulates CASP1 activity. Heterotetramer that consists of two anti-parallel arranged heterodimers, each one formed by a 20 kDa (Caspase-1 subunit p20) and a 10 kDa (Caspase-1 subunit p10) subunit. In terms of processing, the two subunits are derived from the precursor sequence by an autocatalytic mechanism. Post-translationally, ubiquitinated via 'Lys-11'-linked polyubiquitination. Deubiquitinated by USP8.

It is found in the cytoplasm. It localises to the cell membrane. The catalysed reaction is Strict requirement for an Asp residue at position P1 and has a preferred cleavage sequence of Tyr-Val-Ala-Asp-|-.. Its function is as follows. Thiol protease involved in a variety of inflammatory processes by proteolytically cleaving other proteins, such as the precursors of the inflammatory cytokines interleukin-1 beta (IL1B) and interleukin 18 (IL18) as well as the pyroptosis inducer Gasdermin-D (GSDMD), into active mature peptides. Plays a key role in cell immunity as an inflammatory response initiator: once activated through formation of an inflammasome complex, it initiates a pro-inflammatory response through the cleavage of the two inflammatory cytokines IL1B and IL18, releasing the mature cytokines which are involved in a variety of inflammatory processes. Cleaves a tetrapeptide after an Asp residue at position P1. Also initiates pyroptosis, a programmed lytic cell death pathway, through cleavage of GSDMD. In contrast to cleavage of interleukin IL1B, recognition and cleavage of GSDMD is not strictly dependent on the consensus cleavage site but depends on an exosite interface on CASP1 that recognizes and binds the Gasdermin-D, C-terminal (GSDMD-CT) part. Cleaves and activates CASP7 in response to bacterial infection, promoting plasma membrane repair. Upon inflammasome activation, during DNA virus infection but not RNA virus challenge, controls antiviral immunity through the cleavage of CGAS, rendering it inactive. In apoptotic cells, cleaves SPHK2 which is released from cells and remains enzymatically active extracellularly. The protein is Caspase-1 (Casp1) of Rattus norvegicus (Rat).